The primary structure comprises 395 residues: uncharacterized protein (395 aa).

Helical transmembrane passes span 15–35 (ILAFSFFIAFLVVVSVLVTVF), 56–76 (WPWILLIVLGIVVTLAWNIII), 86–106 (FHAPWWEWVLFACVVQFFQIV), 131–151 (AVLLVTSTGAFWNLAQALITW), 175–195 (WFSFAGMIFDVVVAILFIFIA), 254–274 (LANILIAVVGYFSVFAVFAIV), 298–318 (IAITASNFIPVPSGEGATQFV), and 348–368 (VYIPAILFSLCFIGWVVQVVI).

Its subcellular location is the cell membrane. This is an uncharacterized protein from Mycoplasma pneumoniae (strain ATCC 29342 / M129 / Subtype 1) (Mycoplasmoides pneumoniae).